A 540-amino-acid chain; its full sequence is Phenylalanine--tRNA ligase beta subunit (540 aa).

A B5 domain is found at 268-343 (LQHKSIKITA…ITYGYNNLSP (76 aa)). Mg(2+) is bound by residues Asp321, Asp327, Glu330, and Glu331.

Belongs to the phenylalanyl-tRNA synthetase beta subunit family. Type 2 subfamily. In terms of assembly, tetramer of two alpha and two beta subunits. Mg(2+) is required as a cofactor.

It is found in the cytoplasm. The catalysed reaction is tRNA(Phe) + L-phenylalanine + ATP = L-phenylalanyl-tRNA(Phe) + AMP + diphosphate + H(+). The chain is Phenylalanine--tRNA ligase beta subunit from Sulfurisphaera tokodaii (strain DSM 16993 / JCM 10545 / NBRC 100140 / 7) (Sulfolobus tokodaii).